Here is a 286-residue protein sequence, read N- to C-terminus: Probable endonuclease 4 (286 aa).

The Zn(2+) site is built by histidine 67, histidine 107, glutamate 144, aspartate 178, histidine 181, histidine 215, aspartate 228, histidine 230, and glutamate 260.

Belongs to the AP endonuclease 2 family. Requires Zn(2+) as cofactor.

The catalysed reaction is Endonucleolytic cleavage to 5'-phosphooligonucleotide end-products.. Functionally, endonuclease IV plays a role in DNA repair. It cleaves phosphodiester bonds at apurinic or apyrimidinic (AP) sites, generating a 3'-hydroxyl group and a 5'-terminal sugar phosphate. The polypeptide is Probable endonuclease 4 (Chloroflexus aggregans (strain MD-66 / DSM 9485)).